A 261-amino-acid polypeptide reads, in one-letter code: Triosephosphate isomerase (261 aa).

10 to 12 contacts substrate; that stretch reads NWK. Histidine 100 acts as the Electrophile in catalysis. The active-site Proton acceptor is the glutamate 172. Substrate-binding positions include glycine 178, serine 218, and 239-240; that span reads GG.

This sequence belongs to the triosephosphate isomerase family. Homodimer.

It is found in the cytoplasm. The enzyme catalyses D-glyceraldehyde 3-phosphate = dihydroxyacetone phosphate. The protein operates within carbohydrate biosynthesis; gluconeogenesis. It functions in the pathway carbohydrate degradation; glycolysis; D-glyceraldehyde 3-phosphate from glycerone phosphate: step 1/1. In terms of biological role, involved in the gluconeogenesis. Catalyzes stereospecifically the conversion of dihydroxyacetone phosphate (DHAP) to D-glyceraldehyde-3-phosphate (G3P). The polypeptide is Triosephosphate isomerase (Mycobacteroides abscessus (strain ATCC 19977 / DSM 44196 / CCUG 20993 / CIP 104536 / JCM 13569 / NCTC 13031 / TMC 1543 / L948) (Mycobacterium abscessus)).